The primary structure comprises 620 residues: Toxin coregulated pilus biosynthesis protein I (620 aa).

Positions 344–580 (TMNDLSIKQT…DVAKQMEDIR (237 aa)) constitute a Methyl-accepting transducer domain.

The protein belongs to the methyl-accepting chemotaxis (MCP) protein family.

The protein resides in the cell inner membrane. Its function is as follows. May function as an environmental regulator of TCP biogenesis. Negatively regulates the synthesis of the major pilin subunit of TCP (TcpA). This is Toxin coregulated pilus biosynthesis protein I (tcpI) from Vibrio cholerae serotype O1 (strain ATCC 39541 / Classical Ogawa 395 / O395).